We begin with the raw amino-acid sequence, 267 residues long: Methyl-coenzyme M reductase II subunit gamma (267 aa).

R123 contributes to the coenzyme M binding site.

Belongs to the methyl-coenzyme M reductase gamma subunit family. In terms of assembly, MCR is a hexamer of two alpha, two beta, and two gamma chains, forming a dimer of heterotrimers. The cofactor is coenzyme F430.

It catalyses the reaction coenzyme B + methyl-coenzyme M = methane + coenzyme M-coenzyme B heterodisulfide. It functions in the pathway one-carbon metabolism; methyl-coenzyme M reduction; methane from methyl-coenzyme M: step 1/1. Component of the methyl-coenzyme M reductase (MCR) I that catalyzes the reductive cleavage of methyl-coenzyme M (CoM-S-CH3 or 2-(methylthio)ethanesulfonate) using coenzyme B (CoB or 7-mercaptoheptanoylthreonine phosphate) as reductant which results in the production of methane and the mixed heterodisulfide of CoB and CoM (CoM-S-S-CoB). This is the final step in methanogenesis. This Methanothermus fervidus (strain ATCC 43054 / DSM 2088 / JCM 10308 / V24 S) protein is Methyl-coenzyme M reductase II subunit gamma (mrtG).